Here is a 357-residue protein sequence, read N- to C-terminus: RGG repeats nuclear RNA binding protein C (357 aa).

The residue at position 2 (Ala2) is an N-acetylalanine. The disordered stretch occupies residues 25-232 (SQKVEKAAAA…AEEAEAREMT (208 aa)). Low complexity predominate over residues 31 to 45 (AAAAVQPPKAAKFPT). Gly residues-rich tracts occupy residues 63-82 (GGRG…GNGG) and 114-128 (SRGG…GGGR). The span at 143-155 (DVERPPRNYDRHS) shows a compositional bias: basic and acidic residues. Residues 159 to 172 (HGTGMKRNGGGRGN) are compositionally biased toward gly residues. The segment covering 190-232 (EVEKSPVAEKQGGEDETPEAKKELTAEEKAQKEAEEAEAREMT) has biased composition (basic and acidic residues). Positions 239–299 (ILEEKKKALQ…KDATEKAKKS (61 aa)) constitute an FF domain. The segment at 308–357 (PADGKRYNGRGGGSRGRGGRGGRGEGGNQRYAKEAAAPAIGDTAQFPSLG) is disordered. The span at 316 to 334 (GRGGGSRGRGGRGGRGEGG) shows a compositional bias: gly residues. Ser355 carries the phosphoserine modification.

Belongs to the SERBP1-HABP4 family.

It is found in the nucleus. The protein resides in the cytoplasm. Its subcellular location is the perinuclear region. Its function is as follows. Ribosome-binding protein that acts as a regulator of mRNA translation by promoting ribosome inactivation. Binds RNA. The chain is RGG repeats nuclear RNA binding protein C from Arabidopsis thaliana (Mouse-ear cress).